A 497-amino-acid polypeptide reads, in one-letter code: Probable gamma-aminobutyrate transaminase 2, mitochondrial (497 aa).

The transit peptide at 1 to 37 directs the protein to the mitochondrion; it reads MNLIKHAAFAASFQGETDCTSHASARKFSTSGSSPLL. Position 153–154 (153–154) interacts with pyridoxal 5'-phosphate; it reads GS. A substrate-binding site is contributed by Tyr186. Asp293 is a pyridoxal 5'-phosphate binding site. Lys322 serves as a coordination point for substrate. The residue at position 322 (Lys322) is an N6-(pyridoxal phosphate)lysine.

The protein belongs to the class-III pyridoxal-phosphate-dependent aminotransferase family.

The protein localises to the mitochondrion. The catalysed reaction is 4-aminobutanoate + pyruvate = succinate semialdehyde + L-alanine. The enzyme catalyses 4-aminobutanoate + glyoxylate = succinate semialdehyde + glycine. Its function is as follows. Transaminase that degrades gamma-amino butyric acid (GABA). This Oryza sativa subsp. indica (Rice) protein is Probable gamma-aminobutyrate transaminase 2, mitochondrial.